Reading from the N-terminus, the 387-residue chain is Erythronate-4-phosphate dehydrogenase (387 aa).

Residues S45 and T67 each coordinate substrate. D147 lines the NAD(+) pocket. R208 is a catalytic residue. D232 serves as a coordination point for NAD(+). Residue E237 is part of the active site. The active-site Proton donor is the H254. Residue G257 coordinates NAD(+). Y258 contacts substrate.

This sequence belongs to the D-isomer specific 2-hydroxyacid dehydrogenase family. PdxB subfamily. As to quaternary structure, homodimer.

It is found in the cytoplasm. It carries out the reaction 4-phospho-D-erythronate + NAD(+) = (R)-3-hydroxy-2-oxo-4-phosphooxybutanoate + NADH + H(+). It functions in the pathway cofactor biosynthesis; pyridoxine 5'-phosphate biosynthesis; pyridoxine 5'-phosphate from D-erythrose 4-phosphate: step 2/5. Its function is as follows. Catalyzes the oxidation of erythronate-4-phosphate to 3-hydroxy-2-oxo-4-phosphonooxybutanoate. The polypeptide is Erythronate-4-phosphate dehydrogenase (Shewanella woodyi (strain ATCC 51908 / MS32)).